The chain runs to 77 residues: U8-lycotoxin-Ls1u (77 aa).

Residues 1-20 (MKLIIFTGLVLFAIVSLIEA) form the signal peptide. A propeptide spanning residues 21–26 (QAENEK) is cleaved from the precursor.

It belongs to the neurotoxin 19 (CSTX) family. 08 (U8-Lctx) subfamily. Post-translationally, contains 4 disulfide bonds. As to expression, expressed by the venom gland.

It is found in the secreted. This Lycosa singoriensis (Wolf spider) protein is U8-lycotoxin-Ls1u.